Reading from the N-terminus, the 205-residue chain is Outer-membrane lipoprotein LolB (205 aa).

An N-terminal signal peptide occupies residues Met-1–Gly-17. Residue Cys-18 is the site of N-palmitoyl cysteine attachment. Residue Cys-18 is the site of S-diacylglycerol cysteine attachment.

The protein belongs to the LolB family. As to quaternary structure, monomer.

It is found in the cell outer membrane. Plays a critical role in the incorporation of lipoproteins in the outer membrane after they are released by the LolA protein. The sequence is that of Outer-membrane lipoprotein LolB from Pseudomonas fluorescens (strain ATCC BAA-477 / NRRL B-23932 / Pf-5).